A 334-amino-acid chain; its full sequence is MAILVTGGAGYIGSHTVLFLLEQGEQVIVLDNLQKGHAGALSDVTFYHGDIRDDQLLDTIFTTHSIDTVIHFAANSLVGESVKQPIEYYENNVIGTHTLLKKMLEHDVKKIVFSSTAATYGEPVQIPIQESDPTIPTNPYGETKLAIEKMFHWCQEAYGLQYVCLRYFNAAGADPNGRIGEDHSPESHLIPIVLQVALGQRERVAIFGDDYQTEDGSCIRDYIHVMDLANAHYLACEHLRKDGQSGSFNLGNGKGFSVKEVIEVCRQVTGHPIPAEIAPRRSGDPASLIASSEKAQTILGWEPKYPSLETMVEHAWNWHKEHPHGYSTENKDKQ.

Residues 11 to 12 (YI), 31 to 36 (DNLQKG), 50 to 51 (DI), 72 to 76 (FAANS), N91, T116, Y140, K144, and F168 each bind NAD(+). Positions 116 and 140 each coordinate substrate. Y140 acts as the Proton acceptor in catalysis. Substrate is bound by residues N169, 188–189 (HL), 205–207 (AIF), R220, and 281–284 (RSGD).

It belongs to the NAD(P)-dependent epimerase/dehydratase family. As to quaternary structure, homodimer. The cofactor is NAD(+).

The enzyme catalyses UDP-alpha-D-glucose = UDP-alpha-D-galactose. It participates in carbohydrate metabolism; galactose metabolism. In terms of biological role, involved in the metabolism of galactose. Catalyzes the conversion of UDP-galactose (UDP-Gal) to UDP-glucose (UDP-Glc) through a mechanism involving the transient reduction of NAD. This chain is UDP-glucose 4-epimerase (galE), found in Halalkalibacterium halodurans (strain ATCC BAA-125 / DSM 18197 / FERM 7344 / JCM 9153 / C-125) (Bacillus halodurans).